Consider the following 622-residue polypeptide: MKEALEPAKKRTRGLGAVTKIDTSRSKGPLLSSLSQPQGPTAAQKGPKKTGPRGCTAVGSVLKNQKLAPTAPAQKPVRKRPGKRPDWDLKGQLCDLTEELKCYREKTQKLDQENQGLQEQLKEAQEQAAALGTERNTLEGELASVRTQAEQCQQKLEALCARVLELEEWLGTKENLIQELQKEQLELQEERKALATRLEEQERRLQASEAALLSNESEVVCLRQKTAAQVTLLAEQGDRLHGLEMERRRLHNQLQELKGNIRVFCRVRPVLAGEPTPSPGFLLFPHGPAGPSDPPTRLSLSRSDDRRSTLTRAPAPTTRHDFSFDRVFPPGSKQEEVFEEISMLVQSALDGYPVCIFAYGQTGSGKTFTMEGRPGGDPQLEGLIPRRMRHLFSVAQEMSGQGWTYSFVASYVEIYNETVRDLLATGTRKGQGECEIRRARPGSEELTVTNARYVPVSCEREVEALLHLAHQNRAVARTAQNERSSRSHSVFQLQISGEHAARGLQCVAPLNLVDLAGSERLDPGLTLGPGERDRLRETQSINSSLSTLGLVIMALSNKESHVPYRNSKLTYLLQNSLGGSAKMLMFVNISPLEENVSESLNSLRFASKVNQCVIGTAQANKK.

Residues 1–88 are disordered; the sequence is MKEALEPAKK…KRPGKRPDWD (88 aa). Positions 32 to 41 are enriched in polar residues; the sequence is SSLSQPQGPT. Positions 95–264 form a coiled coil; that stretch reads DLTEELKCYR…QELKGNIRVF (170 aa). The Kinesin motor domain occupies 260–612; the sequence is NIRVFCRVRP…LRFASKVNQC (353 aa). The disordered stretch occupies residues 279–323; sequence PGFLLFPHGPAGPSDPPTRLSLSRSDDRRSTLTRAPAPTTRHDFS. Threonine 309 carries the phosphothreonine modification. 360-367 contacts ATP; that stretch reads GQTGSGKT.

The protein belongs to the TRAFAC class myosin-kinesin ATPase superfamily. Kinesin family. NCD subfamily. As to quaternary structure, binds NUBP1 and NUBP2. Interacts with PPP1R42.

The protein localises to the nucleus. It is found in the cytoplasm. The protein resides in the cytoskeleton. Its subcellular location is the microtubule organizing center. It localises to the centrosome. The protein localises to the spindle. It is found in the early endosome. Minus end-directed microtubule-dependent motor required for bipolar spindle formation. May contribute to movement of early endocytic vesicles. Regulates cilium formation and structure. The chain is Kinesin-like protein KIFC1 from Cricetulus griseus (Chinese hamster).